The following is an 857-amino-acid chain: Alanine--tRNA ligase (857 aa).

Residues histidine 556, histidine 560, cysteine 658, and histidine 662 each contribute to the Zn(2+) site.

This sequence belongs to the class-II aminoacyl-tRNA synthetase family. Zn(2+) is required as a cofactor.

It is found in the cytoplasm. The catalysed reaction is tRNA(Ala) + L-alanine + ATP = L-alanyl-tRNA(Ala) + AMP + diphosphate. Its function is as follows. Catalyzes the attachment of alanine to tRNA(Ala) in a two-step reaction: alanine is first activated by ATP to form Ala-AMP and then transferred to the acceptor end of tRNA(Ala). Also edits incorrectly charged Ser-tRNA(Ala) and Gly-tRNA(Ala) via its editing domain. The chain is Alanine--tRNA ligase from Sulfurovum sp. (strain NBC37-1).